Consider the following 295-residue polypeptide: MNKRRNLLNISDLTVDDVENITKLANQYLKKEVANSHILENKTVINLFFEDSTRTLASFEIAAKSLGANVVTLPIRSSSINKGEDLKDMIKTLNAMNPDYIIIRHKSSGIINTLAKYVNCSLINAGDGSSEHPTQALADYLVISNHKKQIKDLKVVICGDILHSRVARSNIRLLKMFGAEINLVAPPTLICKHFPEVDSVHYSLIEGIKDADVIMLLRLQKERMNNSSSEKEYFYLYGLDSQKLSYAKPDAIVMHPGPINRGIEISSDVADCVILQQVEFGLAIRKAVLHYYRPC.

Residues arginine 54 and threonine 55 each contribute to the carbamoyl phosphate site. Lysine 82 lines the L-aspartate pocket. Carbamoyl phosphate is bound by residues arginine 104, histidine 132, and glutamine 135. Arginine 165 and arginine 218 together coordinate L-aspartate. 2 residues coordinate carbamoyl phosphate: glycine 257 and proline 258.

Belongs to the aspartate/ornithine carbamoyltransferase superfamily. ATCase family. In terms of assembly, heterododecamer (2C3:3R2) of six catalytic PyrB chains organized as two trimers (C3), and six regulatory PyrI chains organized as three dimers (R2).

The catalysed reaction is carbamoyl phosphate + L-aspartate = N-carbamoyl-L-aspartate + phosphate + H(+). The protein operates within pyrimidine metabolism; UMP biosynthesis via de novo pathway; (S)-dihydroorotate from bicarbonate: step 2/3. Its function is as follows. Catalyzes the condensation of carbamoyl phosphate and aspartate to form carbamoyl aspartate and inorganic phosphate, the committed step in the de novo pyrimidine nucleotide biosynthesis pathway. The protein is Aspartate carbamoyltransferase catalytic subunit of Wolbachia pipientis wMel.